An 81-amino-acid polypeptide reads, in one-letter code: ATP synthase subunit c, chloroplastic (81 aa).

2 helical membrane-spanning segments follow: residues 4 to 24 (VISA…SIGP) and 57 to 77 (LAFM…LLFA).

It belongs to the ATPase C chain family. As to quaternary structure, F-type ATPases have 2 components, F(1) - the catalytic core - and F(0) - the membrane proton channel. F(1) has five subunits: alpha(3), beta(3), gamma(1), delta(1), epsilon(1). F(0) has four main subunits: a(1), b(1), b'(1) and c(10-14). The alpha and beta chains form an alternating ring which encloses part of the gamma chain. F(1) is attached to F(0) by a central stalk formed by the gamma and epsilon chains, while a peripheral stalk is formed by the delta, b and b' chains.

The protein resides in the plastid. It is found in the chloroplast thylakoid membrane. Functionally, f(1)F(0) ATP synthase produces ATP from ADP in the presence of a proton or sodium gradient. F-type ATPases consist of two structural domains, F(1) containing the extramembraneous catalytic core and F(0) containing the membrane proton channel, linked together by a central stalk and a peripheral stalk. During catalysis, ATP synthesis in the catalytic domain of F(1) is coupled via a rotary mechanism of the central stalk subunits to proton translocation. Key component of the F(0) channel; it plays a direct role in translocation across the membrane. A homomeric c-ring of between 10-14 subunits forms the central stalk rotor element with the F(1) delta and epsilon subunits. The protein is ATP synthase subunit c, chloroplastic of Zygnema circumcarinatum (Green alga).